A 442-amino-acid chain; its full sequence is Putative major teichoic acid biosynthesis protein C (442 aa).

Its function is as follows. Unknown. Might be involved in poly(glycerol phosphate) teichoic acid biosynthesis. This Bacillus subtilis (strain 168) protein is Putative major teichoic acid biosynthesis protein C (tagC).